We begin with the raw amino-acid sequence, 325 residues long: Formimidoylglutamase (325 aa).

Positions 125, 155, 157, 159, 246, and 248 each coordinate Mn(2+).

The protein belongs to the arginase family. The cofactor is Mn(2+).

It catalyses the reaction N-formimidoyl-L-glutamate + H2O = formamide + L-glutamate. It participates in amino-acid degradation; L-histidine degradation into L-glutamate; L-glutamate from N-formimidoyl-L-glutamate (hydrolase route): step 1/1. Catalyzes the conversion of N-formimidoyl-L-glutamate to L-glutamate and formamide. The polypeptide is Formimidoylglutamase (Ralstonia nicotianae (strain ATCC BAA-1114 / GMI1000) (Ralstonia solanacearum)).